The primary structure comprises 61 residues: Large ribosomal subunit protein bL32 (61 aa).

It belongs to the bacterial ribosomal protein bL32 family.

In Acidithiobacillus ferrooxidans (strain ATCC 23270 / DSM 14882 / CIP 104768 / NCIMB 8455) (Ferrobacillus ferrooxidans (strain ATCC 23270)), this protein is Large ribosomal subunit protein bL32.